Consider the following 466-residue polypeptide: F-box only protein 15 (466 aa).

The region spanning 27-73 (SASLDSLPSEVLLKILSYLDAAALLCAGCVNRRFYHLANDNFIWIRI) is the F-box domain.

Directly interacts with SKP1 and CUL1.

Functionally, substrate-recognition component of the SCF (SKP1-CUL1-F-box protein)-type E3 ubiquitin ligase complex. In Bos taurus (Bovine), this protein is F-box only protein 15 (FBXO15).